We begin with the raw amino-acid sequence, 260 residues long: Zinc import ATP-binding protein ZnuC (260 aa).

The ABC transporter domain occupies 14-229 (LTARNLCADR…PEFARLFGDQ (216 aa)). 46–53 (GPNGAGKS) is a binding site for ATP.

This sequence belongs to the ABC transporter superfamily. Zinc importer (TC 3.A.1.15.5) family. The complex is composed of two ATP-binding proteins (ZnuC), two transmembrane proteins (ZnuB) and a solute-binding protein (ZnuA).

The protein resides in the cell inner membrane. The enzyme catalyses Zn(2+)(out) + ATP(in) + H2O(in) = Zn(2+)(in) + ADP(in) + phosphate(in) + H(+)(in). Functionally, part of the ABC transporter complex ZnuABC involved in zinc import. Responsible for energy coupling to the transport system. The polypeptide is Zinc import ATP-binding protein ZnuC (Magnetococcus marinus (strain ATCC BAA-1437 / JCM 17883 / MC-1)).